We begin with the raw amino-acid sequence, 176 residues long: Small ribosomal subunit protein uS5 (176 aa).

Positions F18–V81 constitute an S5 DRBM domain.

It belongs to the universal ribosomal protein uS5 family. In terms of assembly, part of the 30S ribosomal subunit. Contacts proteins S4 and S8.

Its function is as follows. With S4 and S12 plays an important role in translational accuracy. Located at the back of the 30S subunit body where it stabilizes the conformation of the head with respect to the body. The protein is Small ribosomal subunit protein uS5 of Deinococcus deserti (strain DSM 17065 / CIP 109153 / LMG 22923 / VCD115).